We begin with the raw amino-acid sequence, 118 residues long: uncharacterized protein (118 aa).

This is an uncharacterized protein from Aquifex aeolicus (strain VF5).